The primary structure comprises 485 residues: Glutamyl-tRNA(Gln) amidotransferase subunit A (485 aa).

Active-site charge relay system residues include K76 and S155. The Acyl-ester intermediate role is filled by S179.

It belongs to the amidase family. GatA subfamily. As to quaternary structure, heterotrimer of A, B and C subunits.

The catalysed reaction is L-glutamyl-tRNA(Gln) + L-glutamine + ATP + H2O = L-glutaminyl-tRNA(Gln) + L-glutamate + ADP + phosphate + H(+). Functionally, allows the formation of correctly charged Gln-tRNA(Gln) through the transamidation of misacylated Glu-tRNA(Gln) in organisms which lack glutaminyl-tRNA synthetase. The reaction takes place in the presence of glutamine and ATP through an activated gamma-phospho-Glu-tRNA(Gln). This Marinobacter nauticus (strain ATCC 700491 / DSM 11845 / VT8) (Marinobacter aquaeolei) protein is Glutamyl-tRNA(Gln) amidotransferase subunit A.